We begin with the raw amino-acid sequence, 422 residues long: Inner membrane ALBINO3-like protein 2, chloroplastic (422 aa).

Residues 1–10 (MALQMKQSPS) are compositionally biased toward polar residues. The segment at 1-22 (MALQMKQSPSMGVRRASQPVLP) is disordered. The helical transmembrane segment at 65-85 (LYTLAEGGPIDVLAQFFEFVL) threads the bilayer. Residues 86–96 (QTLDEGLESAK) lie on the Stromal side of the membrane. A helical membrane pass occupies residues 97 to 117 (IPYSYGFAIIALTVLVKVATF). At 118 to 166 (PLTQKQVESTLSLQALQPRVKELQAKYADDPENLQLETARLYKEAGVNP) the chain is on the lumenal side. Residues 167–187 (LAGCFPTLATIPVFIGLYNAL) traverse the membrane as a helical segment. Residues 188-225 (SNAAKEGLLTEGFFWIPSLGGPTTIGGGLEWLVPFENG) lie on the Stromal side of the membrane. Residues 226–246 (APPVGWANAAAYLVMPVLLVA) form a helical membrane-spanning segment. The Lumenal segment spans residues 247–275 (SQYASQKIISSQNNQDPSQQQAQAILKFL). The chain crosses the membrane as a helical span at residues 276-296 (PLMIGWFSLNVPSGLTLYWFV). At 297-422 (NNLLSTGQQL…GSEEGKDNSA (126 aa)) the chain is on the stromal side. The disordered stretch occupies residues 325 to 422 (TAGSSTPIVK…GSEEGKDNSA (98 aa)). Positions 334-350 (KPKEERVKKVTGKELGS) are enriched in basic and acidic residues. The segment covering 358-367 (DGEEVEDVEV) has biased composition (acidic residues). Positions 368 to 380 (EVVSSGSSSSSGS) are enriched in low complexity. A compositionally biased stretch (basic and acidic residues) spans 386-400 (RKGEKFRALKAREAA).

It belongs to the OXA1/ALB3/YidC (TC 2.A.9.2) family.

The protein localises to the plastid. It is found in the chloroplast thylakoid membrane. Functionally, required for the insertion of some light-harvesting complexes (LHC) proteins into the chloroplast thylakoid membrane. Essential for the assembly and activity of LHC I and II. Its function is probably partly distinct from that of ALB3.1. This Chlamydomonas reinhardtii (Chlamydomonas smithii) protein is Inner membrane ALBINO3-like protein 2, chloroplastic (ALB3.2).